Reading from the N-terminus, the 212-residue chain is External core antigen (212 aa).

A signal peptide spans 1–19 (MQLFHLCLIIFCSCPTVQA). Residues 25–27 (GWL) are HBEAG. The interval 165 to 212 (NAPILSTLPETTVVRQRGRAPRRRTPSPRRRRSQSPRRRRSQSPASQC) is disordered. Residues 180-205 (QRGRAPRRRTPSPRRRRSQSPRRRRS) show a composition bias toward basic residues. The 1; half-length repeat unit spans residues 184–190 (APRRRTP). Positions 184-206 (APRRRTPSPRRRRSQSPRRRRSQ) are 3 X 8 AA repeats of S-P-R-R-R-R-S-Q. Residues 184–212 (APRRRTPSPRRRRSQSPRRRRSQSPASQC) constitute a propeptide that is removed on maturation. Repeat copies occupy residues 191-198 (SPRRRRSQ) and 199-206 (SPRRRRSQ).

The protein belongs to the orthohepadnavirus precore antigen family. Homodimerizes. Phosphorylated. In terms of processing, cleaved by host furin.

Its subcellular location is the secreted. The protein localises to the host nucleus. May regulate immune response to the intracellular capsid in acting as a T-cell tolerogen, by having an immunoregulatory effect which prevents destruction of infected cells by cytotoxic T-cells. This immune regulation may predispose to chronicity during perinatal infections and prevent severe liver injury during adult infections. The chain is External core antigen from Hepatitis B virus genotype H subtype adw4 (isolate Nicaragua/2928Nic/1997) (HBV-H).